The following is a 446-amino-acid chain: Hepatocyte nuclear factor 4-beta (446 aa).

Residues 47–122 (NSFCAICGDR…AGMKKEAVQN (76 aa)) constitute a DNA-binding region (nuclear receptor). NR C4-type zinc fingers lie at residues 50-70 (CAIC…CDGC) and 86-110 (CRFS…LRKC). The region spanning 137–366 (NGSLSINVLT…SLLQELLLGG (230 aa)) is the NR LBD domain.

The protein belongs to the nuclear hormone receptor family. NR2 subfamily. Homodimerization is required for HNF4-alpha to bind to its recognition site. As to expression, expressed in liver, kidney, stomach, intestine, lung, ovary, and testis. Not expressed in fat, muscle and brain.

The protein resides in the nucleus. Functionally, transcription factor; binds and activates the promoter for the HNF1-alpha gene. Seems to have a lower DNA binding activity than HNF4-alpha and is a weaker transactivator than the alpha isoform. The protein is Hepatocyte nuclear factor 4-beta (hnf4b) of Xenopus laevis (African clawed frog).